Reading from the N-terminus, the 1783-residue chain is uncharacterized protein (1783 aa).

A helical transmembrane segment spans residues 16–36 (FFLLFGIIFVLFSIIFLETSI). Positions 105-119 (GSDSGQSNGSGDNQN) are enriched in low complexity. Positions 105 to 125 (GSDSGQSNGSGDNQNKTIPRK) are disordered. The next 8 helical transmembrane spans lie at 917-937 (VSTV…ILLI), 967-987 (VFAG…AFLL), 1010-1030 (WLSF…ISWI), 1084-1104 (LFTY…AGTI), 1660-1680 (FLLG…GISM), 1709-1729 (FIPA…GVLI), 1730-1750 (GIQA…FEFL), and 1752-1772 (YMVG…YFWI).

Belongs to the ABC-4 integral membrane protein family.

It is found in the cell membrane. This is an uncharacterized protein from Mycoplasma genitalium (strain ATCC 33530 / DSM 19775 / NCTC 10195 / G37) (Mycoplasmoides genitalium).